Consider the following 160-residue polypeptide: Transcriptional repressor NrdR (160 aa).

Residues 3–34 (CPYCQYEDTQVKDSRPAEEGAVIRRRRVCSVC) fold into a zinc finger. In terms of domain architecture, ATP-cone spans 49 to 139 (LLITKKNGRC…VYRDFRNASD (91 aa)).

Belongs to the NrdR family. Zn(2+) serves as cofactor.

Negatively regulates transcription of bacterial ribonucleotide reductase nrd genes and operons by binding to NrdR-boxes. The chain is Transcriptional repressor NrdR from Bartonella tribocorum (strain CIP 105476 / IBS 506).